Reading from the N-terminus, the 331-residue chain is Photosystem II assembly lipoprotein Ycf48 (331 aa).

Residues 1–23 (MIPVIRSFLSLLLCVGLTFGLGG) form the signal peptide. The N-palmitoyl cysteine moiety is linked to residue cysteine 24. Residue cysteine 24 is the site of S-diacylglycerol cysteine attachment.

The protein belongs to the Ycf48 family. Part of early PSII assembly complexes which includes D1 (psbA) and PsbI; not found in mature PSII. Binds to the lumenal side of PSII complexes. Interacts with YidC.

It is found in the cellular thylakoid membrane. A factor required for optimal assembly of photosystem II (PSII), acting in the early stages of PSII assembly. Also plays a role in replacement of photodamaged D1 (psbA). Assists YidC in synthesis of chlorophyll-binding proteins. The chain is Photosystem II assembly lipoprotein Ycf48 from Synechococcus sp. (strain RCC307).